We begin with the raw amino-acid sequence, 946 residues long: Nonribosomal peptide synthetase pngA (946 aa).

The adenylation (A) domain stretch occupies residues A32–V450. Residues Q580 to A659 enclose the Carrier domain. An O-(pantetheine 4'-phosphoryl)serine modification is found at S618. The thioesterase (TE) domain stretch occupies residues P681–F933.

Belongs to the NRP synthetase family.

The catalysed reaction is 2 3-phenylpyruvate + H(+) = phenguignardate + H2O. In terms of biological role, nonribosomal peptide synthetase that mediates the biosynthesis of phenguignardic acid. PngA alone is sufficient for phenguignardic acid synthesis. PngA first activates phenylpyruvic acid (PPA) through its A domain to AMP-PPA. The PPA unit is then loaded to the T domain and eventually transferred to the TE domain. Another PPA unit is then loaded onto the T domain. The TE domain likely promotes the enolate formation on the attached unit, followed by a nucleophilic attack on the carbonyl to yield an ether linkage between the two units. Finally, the TE domain probably catalyzes a similar reaction to give the cyclized dioxolanone core and releases phenguignardic acid. This is Nonribosomal peptide synthetase pngA from Aspergillus terreus (strain NIH 2624 / FGSC A1156).